The chain runs to 398 residues: Mitochondrial protein import protein mas5 (398 aa).

The region spanning 7–88 is the J domain; that stretch reads GYYKVLELSP…KKKKEYDSGM (82 aa). Residues 139 to 219 form a CR-type zinc finger; that stretch reads GKVSKFNVRT…CNGAEYIQDK (81 aa). Substrate is bound at residue 144–146; that stretch reads FNV. Zn(2+)-binding residues include Cys-152, Cys-155, Cys-166, Cys-169, Cys-192, Cys-195, Cys-207, and Cys-210. CXXCXGXG motif repeat units follow at residues 152–159, 166–173, 192–199, and 207–214; these read CTTCDGKG, CKKCNGNG, CDGCDGSG, and CSTCNGAE. Substrate is bound by residues 221 to 222 and 253 to 255; these read MF and VIF. The interval 367–386 is disordered; it reads FGSMPEPERDHEDASEEGAQ.

This sequence belongs to the DnaJ family. Homodimer. Zn(2+) is required as a cofactor.

Its subcellular location is the cytoplasm. In terms of biological role, probably involved in mitosomal protein import. This Encephalitozoon cuniculi (strain GB-M1) (Microsporidian parasite) protein is Mitochondrial protein import protein mas5 (MAS5).